Consider the following 222-residue polypeptide: MKNNAQLLMPREKMLKFGISALTDVELLALFLRTGTRGKDVLTLAKEMLENFGSLYGLLTSEYEQFSGVHGIGVAKFAQLKGIAELARRYYNVRMREESPLLSPEMTREFLQSQLTGEEREIFMVIFLDSQHRVITHSRLFSGTLNHVEVHPREIIREAIKINASALILAHNHPSGCAEPSKADKLITERIIKSCQFMDLRVLDHIVIGRGEYVSFAERGWI.

The MPN domain maps to 100 to 222 (PLLSPEMTRE…YVSFAERGWI (123 aa)). Residues H171, H173, and D184 each contribute to the Zn(2+) site. Positions 171-184 (HNHPSGCAEPSKAD) match the JAMM motif motif.

This sequence belongs to the UPF0758 family. YicR subfamily.

This chain is UPF0758 protein YicR, found in Escherichia coli O45:K1 (strain S88 / ExPEC).